The sequence spans 969 residues: Defective in germ line development protein 3 (969 aa).

Residues 34 to 81 (MAENAASARKLFVSSALKDIIVNPENFYHDFQQSAQMAEDANQRRQVS) form a gld-2-binding region. KH domains are found at residues 34-109 (MAEN…MIEI), 113-187 (RVTL…MRRN), 189-259 (HFTV…NEIL), 270-342 (FTLH…IMDL), and 344-419 (PISM…YQKV). Residues 57 to 471 (PENFYHDFQQ…GSNGRRHRSS (415 aa)) form a gls-1-binding region. Disordered stretches follow at residues 459 to 508 (LSDG…SFSE) and 602 to 711 (EQHR…GDIH). Residues 487-508 (KQFSESSGGPSRSHTRVSSFSE) show a composition bias toward polar residues. Over residues 631 to 644 (PSSSTGSYYPSTTP) the composition is skewed to low complexity. Positions 647-659 (RVYEQVREDDLRS) are enriched in basic and acidic residues. Over residues 664–676 (RRTSVNGDDQNVE) the composition is skewed to polar residues. Composition is skewed to basic and acidic residues over residues 677–687 (SMHDQGYERQY) and 694–711 (LQKD…GDIH). Residues 769 to 969 (LYMHESPHND…DLSLDETSTY (201 aa)) form a gls-1-binding region. The segment at 860–949 (NGVTKTILEP…VLNEKEKEIA (90 aa)) is fbf-1-binding. The interval 950–969 (DKSIESTVTQDLSLDETSTY) is disordered. A compositionally biased stretch (polar residues) spans 954 to 969 (ESTVTQDLSLDETSTY).

As to quaternary structure, interacts (via its KH1 domain) with gld-2. Isoform A but not isoform B interacts specifically with fbf-1 and fbf-2 in an RNA-independent manner. Isoform A interacts with gls-1 isoform C. Expressed in the germline (at protein level). In adult hermaphrodites, first detected in the transition zone (TZ), weakly expressed in the early mitotic region and in pachytene germ cells, and becomes more abundantly expressed as germ cells enter diakinesis (at protein level). Expressed in primary spermatocytes, but not in secondary spermatocytes or adult sperm (at protein level).

It is found in the cytoplasm. It localises to the cytoplasmic granule. Its subcellular location is the perinuclear region. Its function is as follows. Required maternally for germline survival and embryogenesis. Forms a complex with gls-1 which promotes the oogenic cell fate by freeing the translational repressor fbf to repress sperm promoting factors. Promotes maturation of primary spermatocytes to mature sperm. Required during hermaphrodite development to promote sperm fate, which is critical for determining the normal number of sperm. Promotion of sperm fate is at the expense of oogenesis, possibly through the negative regulation of fbf. Required during male development for the continued production of sperm and inhibition of oogenesis. Together with gld-2, promotes the transition from mitosis to meiosis. Required for polyadenylation of neg-1 mRNA during embryogenesis. In Caenorhabditis elegans, this protein is Defective in germ line development protein 3.